Consider the following 1368-residue polypeptide: DNA-directed RNA polymerase subunit beta (1368 aa).

It belongs to the RNA polymerase beta chain family. As to quaternary structure, the RNAP catalytic core consists of 2 alpha, 1 beta, 1 beta' and 1 omega subunit. When a sigma factor is associated with the core the holoenzyme is formed, which can initiate transcription.

It carries out the reaction RNA(n) + a ribonucleoside 5'-triphosphate = RNA(n+1) + diphosphate. DNA-dependent RNA polymerase catalyzes the transcription of DNA into RNA using the four ribonucleoside triphosphates as substrates. The sequence is that of DNA-directed RNA polymerase subunit beta from Herminiimonas arsenicoxydans.